A 341-amino-acid polypeptide reads, in one-letter code: MRVLGLETSCDETGVALYDSERGLLADALFSQIDLHRVYGGVVPELASRDHVKRMLPLIRQVLDESGCKPADIDAIAYTAGPGLVGALLVGASCAQAMAFAWGVPAVGVHHMEGHLLAPMLEEQPPRFPFVALLVSGGHTQLVRVDGIGRYQLLGESVDDAAGEAFDKTAKLIGLGYPGGPEIARLAERGTPGRFVFPRPMTDRPGLDFSFSGLKTFSLNTWQRCVEAGDDSEQTRCDIALAFQTAVVETLVIKCRRALKQTGLKNLVIAGGVSANQALRGGLEKMLGEMKGQVFYARPRFCTDNGAMIAYAGCQRLLAGQHDGPAIAVQPRWPMESLPAV.

Positions 111 and 115 each coordinate Fe cation. Residues 134-138, Asp-167, Gly-180, and Asn-276 contribute to the substrate site; that span reads LVSGG. Asp-304 provides a ligand contact to Fe cation.

Belongs to the KAE1 / TsaD family. It depends on Fe(2+) as a cofactor.

The protein resides in the cytoplasm. The enzyme catalyses L-threonylcarbamoyladenylate + adenosine(37) in tRNA = N(6)-L-threonylcarbamoyladenosine(37) in tRNA + AMP + H(+). In terms of biological role, required for the formation of a threonylcarbamoyl group on adenosine at position 37 (t(6)A37) in tRNAs that read codons beginning with adenine. Is involved in the transfer of the threonylcarbamoyl moiety of threonylcarbamoyl-AMP (TC-AMP) to the N6 group of A37, together with TsaE and TsaB. TsaD likely plays a direct catalytic role in this reaction. This Pseudomonas paraeruginosa (strain DSM 24068 / PA7) (Pseudomonas aeruginosa (strain PA7)) protein is tRNA N6-adenosine threonylcarbamoyltransferase.